A 1102-amino-acid chain; its full sequence is Probable leucine-rich repeat receptor-like protein kinase At5g63930 (1102 aa).

An N-terminal signal peptide occupies residues 1–26; it reads MVKEMMKLAVFFISLLLILLISETTG. Topologically, residues 27-737 are extracellular; the sequence is LNLEGQYLLE…GKPGGMRSSK (711 aa). 4 N-linked (GlcNAc...) asparagine glycosylation sites follow: Asn54, Asn68, Asn79, and Asn119. LRR repeat units follow at residues 72–96, 97–120, 122–144, 145–170, 172–192, 193–216, 217–241, 243–264, 265–288, 289–312, 314–336, 337–360, 361–383, 385–408, 409–432, 433–456, 458–480, 481–504, 505–528, 529–552, 554–576, 577–602, 604–624, 625–649, 651–672, and 674–700; these read DPEVLSLNLSSMVLSGKLSPSIGGL, VHLKQLDLSYNGLSGKIPKEIGNC, SLEILKLNNNQFDGEIPVEIGKL, VSLENLIIYNNRISGSLPVEIGNLLS, SQLVTYSNNISGQLPRSIGNL, KRLTSFRAGQNMISGSLPSEIGGC, ESLVMLGLAQNQLSGELPKEIGMLK, LSQVILWENEFSGFIPREISNC, TSLETLALYKNQLVGPIPKELGDL, QSLEFLYLYRNGLNGTIPREIGNL, YAIEIDFSENALTGEIPLELGNI, EGLELLYLFENQLTGTIPVELSTL, KNLSKLDLSINALTGPIPLGFQY, RGLFMLQLFQNSLSGTIPPKLGWY, SDLWVLDMSDNHLSGRIPSYLCLH, SNMIILNLGTNNLSGNIPTGITTC, TLVQLRLARNNLVGRFPSNLCKQ, VNVTAIELGQNRFRGSIPREVGNC, SALQRLQLADNGFTGELPREIGML, SQLGTLNISSNKLTGEVPSEIFNC, MLQRLDMCCNNFSGTLPSEVGSL, YQLELLKLSNNNLSGTIPVALGNLSR, TELQMGGNLFNGSIPRELGSL, TGLQIALNLSYNKLTGEIPPELSNL, MLEFLLLNNNNLSGEIPSSFAN, and SSLLGYNFSYNSLTGPIPLLRNISMSS. Asn180 carries N-linked (GlcNAc...) asparagine glycosylation. Asn263 carries N-linked (GlcNAc...) asparagine glycosylation. Asn302 and Asn311 each carry an N-linked (GlcNAc...) asparagine glycan. The N-linked (GlcNAc...) asparagine glycan is linked to Asn362. Asn444 carries N-linked (GlcNAc...) asparagine glycosylation. 2 N-linked (GlcNAc...) asparagine glycosylation sites follow: Asn482 and Asn503. Residues Asn535, Asn564, Asn588, Asn599, Asn614, Asn632, Asn661, Asn672, Asn680, and Asn695 are each glycosylated (N-linked (GlcNAc...) asparagine). The helical transmembrane segment at 738-758 threads the bilayer; the sequence is IIAITAAVIGGVSLMLIALIV. Over 759 to 1102 the chain is Cytoplasmic; it reads YLMRRPVRTV…TEELTQTTTP (344 aa). Phosphothreonine occurs at positions 793 and 801. In terms of domain architecture, Protein kinase spans 804-1091; sequence FDESFVVGRG…ERSEGEQEHL (288 aa). ATP is bound by residues 810–818 and Lys832; that span reads VGRGACGTV. Phosphotyrosine occurs at positions 882 and 919. The active-site Proton acceptor is Asp932. Residue Ser966 is modified to Phosphoserine. Residues Tyr974 and Tyr981 each carry the phosphotyrosine modification. Thr982 is subject to Phosphothreonine.

The protein belongs to the protein kinase superfamily. Ser/Thr protein kinase family.

Its subcellular location is the cell membrane. The enzyme catalyses L-seryl-[protein] + ATP = O-phospho-L-seryl-[protein] + ADP + H(+). The catalysed reaction is L-threonyl-[protein] + ATP = O-phospho-L-threonyl-[protein] + ADP + H(+). This Arabidopsis thaliana (Mouse-ear cress) protein is Probable leucine-rich repeat receptor-like protein kinase At5g63930.